A 1480-amino-acid chain; its full sequence is Tubulin-specific chaperone D (1480 aa).

Disordered regions lie at residues 1 to 32 (MENSEDISLNSSEKSIESSVVNLEDQQQSQQQ) and 453 to 476 (NNNNNNNNNENNNEEGEEEEEEIP). 2 stretches are compositionally biased toward low complexity: residues 7–32 (ISLNSSEKSIESSVVNLEDQQQSQQQ) and 453–463 (NNNNNNNNNEN). The span at 464–476 (NNEEGEEEEEEIP) shows a compositional bias: acidic residues. An HEAT 1 repeat occupies 482 to 520 (ILEEIMKSLKDKDTIIRWTSAKAIGRIVNLLPKDMGDQV). The segment at 859 to 880 (KPIITPPSSKSTTNNNNNNNNN) is disordered. The stretch at 886 to 922 (EIAFNIILGYLNENLNHPNEEVQKEASKAFELLFSKY) is one HEAT 2 repeat. The interval 1437–1480 (NPHKQSDDNNNNNNGELINNNTENNNNNNFDDNLPEDSQDLMEI) is disordered. Residues 1444–1468 (DNNNNNNGELINNNTENNNNNNFDD) are compositionally biased toward low complexity. A compositionally biased stretch (acidic residues) spans 1469–1480 (NLPEDSQDLMEI).

Belongs to the TBCD family. Supercomplex made of cofactors A to E. Cofactors A and D function by capturing and stabilizing tubulin in a quasi-native conformation. Cofactor E binds to the cofactor D-tubulin complex; interaction with cofactor C then causes the release of tubulin polypeptides that are committed to the native state.

Its function is as follows. Tubulin-folding protein; involved in the first step of the tubulin folding pathway. In Dictyostelium discoideum (Social amoeba), this protein is Tubulin-specific chaperone D (tbcd).